We begin with the raw amino-acid sequence, 119 residues long: MKKMNVVAFVTLIISFLLLSQVLAELSSSSNNETSSVSQTNDENQTAAFKRTYHHRPRINCGHACARRCSKTSRKKVCHRACGSCCAKCQCVPPGTSGNTASCPCYASIRTHGNKLKCP.

A signal peptide spans 1–24; the sequence is MKKMNVVAFVTLIISFLLLSQVLA.

Belongs to the GASA family. In terms of processing, six disulfide bonds may be present.

It is found in the secreted. Functionally, gibberellin-regulated protein that may function in hormonal controlled steps of development such as seed germination, flowering and seed maturation. This is Gibberellin-regulated protein 9 (GASA9) from Arabidopsis thaliana (Mouse-ear cress).